A 1046-amino-acid chain; its full sequence is Arrestin-related trafficking adapter 3 (1046 aa).

Positions Y115 to F141 are disordered. Over residues A128 to N140 the composition is skewed to low complexity. A phosphoserine mark is found at S155 and S162. Composition is skewed to low complexity over residues S168 to G179 and R198 to R210. The segment at S168–N230 is disordered. A phosphoserine mark is found at S213 and S586. The span at T605 to N614 shows a compositional bias: polar residues. 2 disordered regions span residues T605–S627 and P651–S820. Over residues F669 to S694 the composition is skewed to low complexity. Residues K734 to D785 are compositionally biased toward basic and acidic residues. Residues L802 to S811 show a composition bias toward low complexity. Residues S826 and S838 each carry the phosphoserine modification. A disordered region spans residues N868 to R889. Residues H877–R889 show a composition bias toward polar residues. The residue at position 900 (S900) is a Phosphoserine. The interval Q986–F1017 is disordered. Positions D996–S1008 are enriched in polar residues. Phosphoserine is present on residues S1022 and S1023.

The protein belongs to the ALY1 family. Interacts with PCL6, PCL7 and RSP5. Post-translationally, ubiquitinated by RSP5. In terms of processing, phosphorylated by the cyclin-CDKs PCL6-PHO85 and PCL7-PHO85.

The protein localises to the cytoplasm. May regulate endocytosis by recruiting RSP5 ubiquitin ligase activity to specific plasma membrane proteins in response to extracellular stimuli. The sequence is that of Arrestin-related trafficking adapter 3 (ALY2) from Saccharomyces cerevisiae (strain ATCC 204508 / S288c) (Baker's yeast).